A 91-amino-acid polypeptide reads, in one-letter code: CRISPR-associated endoribonuclease Cas2 2 (91 aa).

Asp6 is a Mg(2+) binding site.

The protein belongs to the CRISPR-associated endoribonuclease Cas2 protein family. Homodimer, forms a heterotetramer with a Cas1 homodimer. It depends on Mg(2+) as a cofactor.

In terms of biological role, CRISPR (clustered regularly interspaced short palindromic repeat), is an adaptive immune system that provides protection against mobile genetic elements (viruses, transposable elements and conjugative plasmids). CRISPR clusters contain sequences complementary to antecedent mobile elements and target invading nucleic acids. CRISPR clusters are transcribed and processed into CRISPR RNA (crRNA). Functions as a ssRNA-specific endoribonuclease. Involved in the integration of spacer DNA into the CRISPR cassette. The sequence is that of CRISPR-associated endoribonuclease Cas2 2 from Moorella thermoacetica (strain ATCC 39073 / JCM 9320).